The following is a 398-amino-acid chain: Elongation factor Tu (398 aa).

In terms of domain architecture, tr-type G spans 10 to 207; it reads KIHLNVGTIG…ILDKNIPVPN (198 aa). The segment at 19–26 is G1; the sequence is GHVDHGKT. Residue 19 to 26 participates in GTP binding; the sequence is GHVDHGKT. Residue Thr-26 participates in Mg(2+) binding. Residues 60–64 form a G2 region; sequence GITIS. The interval 81–84 is G3; it reads DCPG. Residues 81–85 and 136–139 contribute to the GTP site; these read DCPGH and NKAD. The segment at 136-139 is G4; the sequence is NKAD. The tract at residues 174–176 is G5; the sequence is SAL.

Belongs to the TRAFAC class translation factor GTPase superfamily. Classic translation factor GTPase family. EF-Tu/EF-1A subfamily. As to quaternary structure, monomer.

The protein resides in the cytoplasm. The enzyme catalyses GTP + H2O = GDP + phosphate + H(+). Its function is as follows. GTP hydrolase that promotes the GTP-dependent binding of aminoacyl-tRNA to the A-site of ribosomes during protein biosynthesis. The chain is Elongation factor Tu from Carsonella ruddii (strain PV).